The chain runs to 600 residues: Pentatricopeptide repeat-containing protein At3g29230 (600 aa).

PPR repeat units lie at residues 50–80 (DLHI…VQEP), 81–115 (NVHL…GLFA), 116–150 (DNFT…GLSS), 151–183 (DIYV…MSER), 184–218 (DTVS…DLIS), 219–245 (WNTM…MPER), 246–276 (NTVS…MPLP), 279–313 (NVVT…GLKF), 314–348 (DAAA…NLGS), 349–379 (NAYV…IPKK), 380–414 (DLVS…GIRP), 415–445 (DKVT…MEKV), and 451–481 (QVEH…MPME). Positions 486–561 (IWGALLGACR…PSGASSVELE (76 aa)) are type E motif. The interval 562–592 (DGIHEFTVFDKSHPKSDQIYQMLGSLIEPPD) is type E(+) motif.

It belongs to the PPR family. PCMP-E subfamily.

The polypeptide is Pentatricopeptide repeat-containing protein At3g29230 (PCMP-E27) (Arabidopsis thaliana (Mouse-ear cress)).